Consider the following 179-residue polypeptide: ATP-dependent protease subunit HslV (179 aa).

Residue threonine 6 is part of the active site. The Na(+) site is built by serine 162, cysteine 165, and threonine 168.

It belongs to the peptidase T1B family. HslV subfamily. A double ring-shaped homohexamer of HslV is capped on each side by a ring-shaped HslU homohexamer. The assembly of the HslU/HslV complex is dependent on binding of ATP.

It localises to the cytoplasm. It carries out the reaction ATP-dependent cleavage of peptide bonds with broad specificity.. Its activity is regulated as follows. Allosterically activated by HslU binding. Its function is as follows. Protease subunit of a proteasome-like degradation complex believed to be a general protein degrading machinery. This is ATP-dependent protease subunit HslV from Maridesulfovibrio salexigens (strain ATCC 14822 / DSM 2638 / NCIMB 8403 / VKM B-1763) (Desulfovibrio salexigens).